A 629-amino-acid chain; its full sequence is Sushi domain-containing protein 5 (629 aa).

An N-terminal signal peptide occupies residues 1 to 35 (MTAEGPSPPARWHRRLPGLWAAALLLLGLPRLSVR). Over 36–574 (ADGKFFVLES…DGCPGLSRGP (539 aa)) the chain is Extracellular. The Link domain occupies 39 to 134 (KFFVLESQNG…GGTYSALCIK (96 aa)). 3 cysteine pairs are disulfide-bonded: C61–C132, C140–C184, and C167–C197. The 62-residue stretch at 138–199 (KPCGDPPSFP…WYGLVQACGK (62 aa)) folds into the Sushi domain. Basic and acidic residues predominate over residues 225-249 (EDSRTEADEDRGQGDSSEEAPKQDR). 2 disordered regions span residues 225 to 252 (EDSRTEADEDRGQGDSSEEAPKQDRLVS) and 344 to 403 (DGPS…GLDE). Residues 575–595 (VIATIVTVLCLLLLLAGVGMV) traverse the membrane as a helical segment. The Cytoplasmic portion of the chain corresponds to 596–629 (WGYRKCQHKSSVYKLNVGQRQARHYHQQIEMEKV).

Its subcellular location is the membrane. The chain is Sushi domain-containing protein 5 (SUSD5) from Homo sapiens (Human).